The sequence spans 471 residues: P2X purinoceptor 2 (471 aa).

The Cytoplasmic segment spans residues 1–42 (MAAAQPKYPAGATARRLARGCWSALWDYETPKVIVVRNRRLG). Intrachain disulfides connect cysteine 21–cysteine 439, cysteine 125–cysteine 176, cysteine 136–cysteine 159, cysteine 142–cysteine 170, cysteine 226–cysteine 236, and cysteine 270–cysteine 279. A helical transmembrane segment spans residues 43–63 (VLYRAVQLLILLYFVWYVFIV). The Extracellular segment spans residues 64-337 (QKSYQESETG…IVHGQAGKFS (274 aa)). Positions 81 and 83 each coordinate ATP. Asparagine 133 carries an N-linked (GlcNAc...) asparagine glycan. The N-linked (GlcNAc...) asparagine glycan is linked to asparagine 194. Threonine 196 provides a ligand contact to ATP. Positions 296, 300, and 302 each coordinate ATP. Asparagine 310 is a glycosylation site (N-linked (GlcNAc...) asparagine). Residue lysine 319 participates in ATP binding. Residues 320–333 (AYGIRIDVIVHGQA) are pore-forming motif. A helical membrane pass occupies residues 338–358 (LIPTIINLATALTSVGVGSFL). The Cytoplasmic portion of the chain corresponds to 359–471 (CDWILLTFMN…PTDPKGLAQL (113 aa)). A disordered region spans residues 400–471 (GQAPPEPGHR…PTDPKGLAQL (72 aa)).

The protein belongs to the P2X receptor family. In terms of assembly, homotrimer and heterotrimer; functional P2XRs are organized as homomeric and heteromeric trimers. Homotrimer. Forms heterotrimer with P2RX1. Forms heterotrimer with P2RX6. Forms heterotrimer with P2RX3. Expressed in both the central and peripheral nervous system, as well as in the pituitary gland.

It is found in the cell membrane. The catalysed reaction is Ca(2+)(in) = Ca(2+)(out). The enzyme catalyses K(+)(in) = K(+)(out). It catalyses the reaction Na(+)(in) = Na(+)(out). Fast activation by external ATP. Exhibits slow desensitization during prolonged ATP activation. Not sensitive to the ATP agonist:alpha/beta-methylene-ATP. In terms of biological role, ATP-gated nonselective transmembrane cation channel permeable to potassium, sodium and calcium. Activation by extracellular ATP induces a variety of cellular responses, such as excitatory postsynaptic responses in sensory neurons, neuromuscular junctions (NMJ) formation, hearing, perception of taste and peristalsis. In the inner ear, regulates sound transduction and auditory neurotransmission, outer hair cell electromotility, inner ear gap junctions, and K(+) recycling. Mediates synaptic transmission between neurons and from neurons to smooth muscle. This is P2X purinoceptor 2 from Homo sapiens (Human).